Here is a 335-residue protein sequence, read N- to C-terminus: Cytoskeleton protein RodZ (335 aa).

Over 1–111 the chain is Cytoplasmic; that stretch reads MNTEATHDQN…LGKRRKKRDG (111 aa). Residues 19–71 enclose the HTH cro/C1-type domain; that stretch reads LRNAREQLGLSQQAVAERLCLKVSTVRDIEEDKAPADLASTFLRGYIRSYARL. Residues 30-49 constitute a DNA-binding region (H-T-H motif); that stretch reads QQAVAERLCLKVSTVRDIEE. Residues 112–132 traverse the membrane as a helical; Signal-anchor for type II membrane protein segment; sequence WLMTFTWLVLFVVIGLSGAWW. Over 133–335 the chain is Periplasmic; that stretch reads WQDHKAQQEE…TLNAEQSPAQ (203 aa). Residues 148–164 are compositionally biased toward polar residues; that stretch reads DQSSAELNNNQSQSVPL. Residues 148 to 239 are disordered; the sequence is DQSSAELNNN…PDGAAPLPTD (92 aa). 2 stretches are compositionally biased toward low complexity: residues 165–205 and 217–239; these read DTST…DPQQ and DTAA…LPTD.

The protein belongs to the RodZ family.

The protein resides in the cell inner membrane. In terms of biological role, cytoskeletal protein that is involved in cell-shape control through regulation of the length of the long axis. The polypeptide is Cytoskeleton protein RodZ (Escherichia coli O6:K15:H31 (strain 536 / UPEC)).